A 115-amino-acid chain; its full sequence is uncharacterized protein (115 aa).

This is an uncharacterized protein from Rickettsia prowazekii (strain Madrid E).